The following is a 285-amino-acid chain: 4-diphosphocytidyl-2-C-methyl-D-erythritol kinase (285 aa).

Residue Lys-11 is part of the active site. Residue 93-103 (PLAAGLAGGSA) coordinates ATP. The active site involves Asp-135.

This sequence belongs to the GHMP kinase family. IspE subfamily.

The enzyme catalyses 4-CDP-2-C-methyl-D-erythritol + ATP = 4-CDP-2-C-methyl-D-erythritol 2-phosphate + ADP + H(+). It functions in the pathway isoprenoid biosynthesis; isopentenyl diphosphate biosynthesis via DXP pathway; isopentenyl diphosphate from 1-deoxy-D-xylulose 5-phosphate: step 3/6. Its function is as follows. Catalyzes the phosphorylation of the position 2 hydroxy group of 4-diphosphocytidyl-2C-methyl-D-erythritol. The protein is 4-diphosphocytidyl-2-C-methyl-D-erythritol kinase of Moorella thermoacetica (strain ATCC 39073 / JCM 9320).